The sequence spans 251 residues: GTP cyclohydrolase 1 type 2 homolog (251 aa).

The a divalent metal cation site is built by His-63, His-64, Asp-101, His-219, and Glu-223.

This sequence belongs to the GTP cyclohydrolase I type 2/NIF3 family. As to quaternary structure, homohexamer.

The polypeptide is GTP cyclohydrolase 1 type 2 homolog (Pasteurella multocida (strain Pm70)).